A 244-amino-acid polypeptide reads, in one-letter code: Probable transcriptional regulatory protein Xfasm12_1059 (244 aa).

This sequence belongs to the TACO1 family.

It is found in the cytoplasm. This is Probable transcriptional regulatory protein Xfasm12_1059 from Xylella fastidiosa (strain M12).